Consider the following 1035-residue polypeptide: Unconventional myosin IC (1035 aa).

Positions 21–703 constitute a Myosin motor domain; sequence GVQDFVLLEN…TLFDTEDAYQ (683 aa). 114–121 contacts ATP; sequence GESGSGKT. At Ser304 the chain carries Phosphoserine. At Thr310 the chain carries Phosphothreonine. Positions 578-600 are actin-binding; the sequence is LNNLMDILMCKEPSYIRCIKPND. 3 consecutive IQ domains span residues 696-728, 729-751, and 752-779; these read FDTE…KYLK, LRAQ…AAKK, and RREA…FNEE. The region spanning 857 to 1035 is the TH1 domain; sequence KNNYASSVST…KGHLVIIGTQ (179 aa).

Belongs to the TRAFAC class myosin-kinesin ATPase superfamily. Myosin family. In terms of assembly, binds F-actin. In terms of tissue distribution, in the embryo, expressed in gastric caeca, midgut cells of the proventriculus, and in the mid and hindgut. In the larval and adult gut brush border, expressed in the microvilli. Also expressed at high levels in follicle cells during oogenesis.

Its subcellular location is the cytoplasm. The protein localises to the cell cortex. It is found in the cell membrane. Its function is as follows. Unconventional myosin that functions as actin-based motor protein with ATPase activity. Binds to membranes enriched in phosphatidylinositol 4-5-bisphosphate, and can glide along actin filaments when anchored to a lipid bilayer. Functions as antagonist for Myo31DF, an unconventional myosin with an essential role in the establishment of body left-right asymmetry. In Drosophila melanogaster (Fruit fly), this protein is Unconventional myosin IC (Myo61F).